The sequence spans 135 residues: Large ribosomal subunit protein uL16c (135 aa).

Belongs to the universal ribosomal protein uL16 family. As to quaternary structure, part of the 50S ribosomal subunit.

It localises to the plastid. The sequence is that of Large ribosomal subunit protein uL16c from Epifagus virginiana (Beechdrops).